A 355-amino-acid chain; its full sequence is Alanine racemase (355 aa).

The active-site Proton acceptor; specific for D-alanine is lysine 34. Lysine 34 is modified (N6-(pyridoxal phosphate)lysine). Arginine 133 contributes to the substrate binding site. The active-site Proton acceptor; specific for L-alanine is tyrosine 249. Position 297 (methionine 297) interacts with substrate.

It belongs to the alanine racemase family. Requires pyridoxal 5'-phosphate as cofactor.

It catalyses the reaction L-alanine = D-alanine. The protein operates within amino-acid biosynthesis; D-alanine biosynthesis; D-alanine from L-alanine: step 1/1. Its function is as follows. Catalyzes the interconversion of L-alanine and D-alanine. May also act on other amino acids. The polypeptide is Alanine racemase (alr) (Rickettsia rickettsii (strain Sheila Smith)).